A 378-amino-acid chain; its full sequence is 8-demethyl-8-alpha-L-rhamnosyl tetracenomycin-C 2'-O-methyltransferase (378 aa).

S-adenosyl-L-methionine-binding positions include 195–201, Ser-210, Asp-227, 245–246, and Asp-268; these read EIGVGGY and DQ. Asp-268 contributes to the Mg(2+) binding site. The active-site Proton acceptor is His-271. 2 residues coordinate Mg(2+): Glu-296 and Asp-297.

This sequence belongs to the methyltransferase OleY/MycE family. Requires Mg(2+) as cofactor.

It carries out the reaction 8-demethyl-8-alpha-L-rhamnosyl-tetracenomycin C + S-adenosyl-L-methionine = 8-demethyl-8-(2-O-methyl-alpha-L-rhamnosyl)-tetracenomycin C + S-adenosyl-L-homocysteine + H(+). It functions in the pathway antibiotic biosynthesis. Its function is as follows. O-methyltransferase involved in the biosynthesis of the permethylated L-rhamnose moiety of elloramycin, an antitumor polyketide. Mediates the methylation of the hydroxy groups at the 2'-position after the sugar moiety has been attached to the aglycon. In Streptomyces olivaceus, this protein is 8-demethyl-8-alpha-L-rhamnosyl tetracenomycin-C 2'-O-methyltransferase.